The following is a 197-amino-acid chain: Probable GTP-binding protein EngB (197 aa).

One can recognise an EngB-type G domain in the interval 22–195; the sequence is GFPEIGLAGR…WQWIEAHTVG (174 aa). GTP contacts are provided by residues 30–37, 57–61, 75–78, 142–145, and 174–176; these read GRSNVGKS, GKTQT, DVPG, TKSD, and FSA. Mg(2+)-binding residues include Ser37 and Thr59.

It belongs to the TRAFAC class TrmE-Era-EngA-EngB-Septin-like GTPase superfamily. EngB GTPase family. Mg(2+) serves as cofactor.

In terms of biological role, necessary for normal cell division and for the maintenance of normal septation. In Lactiplantibacillus plantarum (strain ATCC BAA-793 / NCIMB 8826 / WCFS1) (Lactobacillus plantarum), this protein is Probable GTP-binding protein EngB.